The sequence spans 199 residues: Streptomycin biosynthesis protein StrG (199 aa).

It participates in antibiotic biosynthesis; streptomycin biosynthesis. In terms of biological role, may be involved in the formation of N-methyl-L-glucosamine. The polypeptide is Streptomycin biosynthesis protein StrG (strG) (Streptomyces griseus).